A 157-amino-acid chain; its full sequence is Large ribosomal subunit protein bL20 (157 aa).

The tract at residues 121–157 (TSAPAVSAEAAPKAKAAKKPAAKKAAAKKPVAEEAAK) is disordered. The span at 122–134 (SAPAVSAEAAPKA) shows a compositional bias: low complexity. The segment covering 135 to 147 (KAAKKPAAKKAAA) has biased composition (basic residues).

This sequence belongs to the bacterial ribosomal protein bL20 family.

In terms of biological role, binds directly to 23S ribosomal RNA and is necessary for the in vitro assembly process of the 50S ribosomal subunit. It is not involved in the protein synthesizing functions of that subunit. The chain is Large ribosomal subunit protein bL20 (rplT) from Arthrobacter sp. (strain FB24).